The chain runs to 168 residues: tRNA-splicing endonuclease subunit Sen15 (168 aa).

Residues 1 to 32 are disordered; the sequence is MEERSDSEPTPGCSGPGPAPVRDGGGAHTWAP. Phosphoserine is present on residues serine 7 and serine 165.

The protein belongs to the SEN15 family. In terms of assembly, homodimer. tRNA splicing endonuclease is a heterotetramer composed of TSEN2, TSEN15, TSEN34/LENG5 and TSEN54. tRNA splicing endonuclease complex also contains proteins of the pre-mRNA 3' end processing machinery such as CLP1, CPSF1, CPSF4 and CSTF2.

It localises to the nucleus. Its subcellular location is the nucleolus. Non-catalytic subunit of the tRNA-splicing endonuclease complex, a complex responsible for identification and cleavage of the splice sites in pre-tRNA. It cleaves pre-tRNA at the 5' and 3' splice sites to release the intron. The products are an intron and two tRNA half-molecules bearing 2',3' cyclic phosphate and 5'-OH termini. There are no conserved sequences at the splice sites, but the intron is invariably located at the same site in the gene, placing the splice sites an invariant distance from the constant structural features of the tRNA body. The tRNA splicing endonuclease is also involved in mRNA processing via its association with pre-mRNA 3'-end processing factors, establishing a link between pre-tRNA splicing and pre-mRNA 3'-end formation, suggesting that the endonuclease subunits function in multiple RNA-processing events. This chain is tRNA-splicing endonuclease subunit Sen15 (Tsen15), found in Mus musculus (Mouse).